Reading from the N-terminus, the 638-residue chain is Cell division control protein 45 homolog (638 aa).

The interval 151 to 204 is disordered; it reads ELSDEENSDSSNEREEEVEDDNRSVESYSSSDYQARSRRRFSEETTQRRAEIKE. The segment covering 153-170 has biased composition (acidic residues); it reads SDEENSDSSNEREEEVED. Positions 190–204 are enriched in basic and acidic residues; sequence RFSEETTQRRAEIKE.

It belongs to the CDC45 family. As to quaternary structure, interacts with sld3.

Its subcellular location is the nucleus. Its function is as follows. Required for initiation of chromosomal DNA replication. May have a role in regulating the MCM proteins nda1 and nda4. This chain is Cell division control protein 45 homolog (sna41), found in Schizosaccharomyces pombe (strain 972 / ATCC 24843) (Fission yeast).